Consider the following 552-residue polypeptide: Enhanced filamentous growth protein (552 aa).

3 disordered regions span residues 17-48, 70-93, and 121-180; these read NNGM…SQQQ, QGQP…QQQQ, and QLSQ…QPTP. Positions 121–151 are enriched in polar residues; the sequence is QLSQPQPQHYNGSNRNYTSAPSGAPIPSNST. Positions 204-310 constitute an HTH APSES-type domain; that stretch reads RVTTTMWEDE…RDIKRVIQTG (107 aa). A DNA-binding region (H-T-H motif) is located at residues 238 to 259; sequence GTKLLNVAQMTRGRRDGILKSE. 3 disordered regions span residues 327-384, 410-447, and 478-552; these read TSAS…SPVN, QYGQ…QQQM, and SSYP…KEEK. The segment covering 340–381 has biased composition (low complexity); sequence AAATTTAATAISKSSSGNGNSISATSGGSNVSGASGAGSTTS. Polar residues predominate over residues 419-434; it reads KNQNTPASQPGSTTND. Low complexity-rich tracts occupy residues 435–447 and 478–504; these read QYLQ…QQQM and SSYP…DQQQ. The span at 516 to 546 shows a compositional bias: polar residues; sequence SVHQSPQVQSLTQGSVHPSPQQHQANQSAST.

This sequence belongs to the EFG1/PHD1/stuA family.

It localises to the nucleus. In terms of biological role, putative transcription factor that stimulates pseudohyphal morphogenesis. This is Enhanced filamentous growth protein (EFG1) from Candida albicans (Yeast).